The chain runs to 441 residues: MQQGSAPKISFVSLGCPKALVDSERIITRLRAEGYELARKHDGADVVIVNTCGFLDSAKQESLSAIGSAMAENGKVIVTGCMGAEPEQIEQAYPGVLSITGPQQYESVLEAVHRASPPIHNPHLDLVPPQGIKLTPRHYAYLKISEGCNNRCTFCIIPKLRGDLVSRPAADVLREAERLVAAGVKELLVISQDTSAYGLDLKYAESSWKDRSVRARFLDLARELGELGAWVRLHYVYPYPHVDEVVGLMAEGRVLPYLDIPFQHASPNVLKAMRRPAAQDKTLDRIKSWRAACPDLALRSTFIVGFPGETDADFAYLLDWLDEAEIDRLGCFKYEPVAGATSNALPDQVPDEVKQERWNALMARQQKISARRLKRKVGTRQQIIIDEVGPTVAKGRSKADAPEIDGSVYVSSRRPLRVGEIVTARIERADEYDLHGTVAGF.

An MTTase N-terminal domain is found at 7–117 (PKISFVSLGC…VLEAVHRASP (111 aa)). [4Fe-4S] cluster contacts are provided by C16, C52, C81, C148, C152, and C155. The region spanning 134-371 (LTPRHYAYLK…MARQQKISAR (238 aa)) is the Radical SAM core domain. The region spanning 374–440 (KRKVGTRQQI…EYDLHGTVAG (67 aa)) is the TRAM domain.

This sequence belongs to the methylthiotransferase family. RimO subfamily. It depends on [4Fe-4S] cluster as a cofactor.

The protein localises to the cytoplasm. It catalyses the reaction L-aspartate(89)-[ribosomal protein uS12]-hydrogen + (sulfur carrier)-SH + AH2 + 2 S-adenosyl-L-methionine = 3-methylsulfanyl-L-aspartate(89)-[ribosomal protein uS12]-hydrogen + (sulfur carrier)-H + 5'-deoxyadenosine + L-methionine + A + S-adenosyl-L-homocysteine + 2 H(+). In terms of biological role, catalyzes the methylthiolation of an aspartic acid residue of ribosomal protein uS12. The polypeptide is Ribosomal protein uS12 methylthiotransferase RimO (Bradyrhizobium sp. (strain BTAi1 / ATCC BAA-1182)).